A 167-amino-acid polypeptide reads, in one-letter code: Interferon gamma (167 aa).

The signal sequence occupies residues 1 to 23 (MNYTSFIFAFQLCIILCSSGYYC). Gln24 carries the post-translational modification Pyrrolidone carboxylic acid. 2 N-linked (GlcNAc...) asparagine glycosylation sites follow: Asn39 and Asn107.

It belongs to the type II (or gamma) interferon family. In terms of assembly, homodimer. Interacts with IFNGR1 (via extracellular domain); this interaction promotes IFNGR1 dimerization. Released primarily from activated T lymphocytes.

It localises to the secreted. Type II interferon produced by immune cells such as T-cells and NK cells that plays crucial roles in antimicrobial, antiviral, and antitumor responses by activating effector immune cells and enhancing antigen presentation. Primarily signals through the JAK-STAT pathway after interaction with its receptor IFNGR1 to affect gene regulation. Upon IFNG binding, IFNGR1 intracellular domain opens out to allow association of downstream signaling components JAK2, JAK1 and STAT1, leading to STAT1 activation, nuclear translocation and transcription of IFNG-regulated genes. Many of the induced genes are transcription factors such as IRF1 that are able to further drive regulation of a next wave of transcription. Plays a role in class I antigen presentation pathway by inducing a replacement of catalytic proteasome subunits with immunoproteasome subunits. In turn, increases the quantity, quality, and repertoire of peptides for class I MHC loading. Increases the efficiency of peptide generation also by inducing the expression of activator PA28 that associates with the proteasome and alters its proteolytic cleavage preference. Up-regulates as well MHC II complexes on the cell surface by promoting expression of several key molecules such as cathepsins B/CTSB, H/CTSH, and L/CTSL. Participates in the regulation of hematopoietic stem cells during development and under homeostatic conditions by affecting their development, quiescence, and differentiation. The chain is Interferon gamma (IFNG) from Felis catus (Cat).